A 310-amino-acid polypeptide reads, in one-letter code: Porphobilinogen deaminase (310 aa).

Cysteine 242 is subject to S-(dipyrrolylmethanemethyl)cysteine.

Belongs to the HMBS family. As to quaternary structure, monomer. Dipyrromethane serves as cofactor.

It catalyses the reaction 4 porphobilinogen + H2O = hydroxymethylbilane + 4 NH4(+). The protein operates within porphyrin-containing compound metabolism; protoporphyrin-IX biosynthesis; coproporphyrinogen-III from 5-aminolevulinate: step 2/4. Functionally, tetrapolymerization of the monopyrrole PBG into the hydroxymethylbilane pre-uroporphyrinogen in several discrete steps. The chain is Porphobilinogen deaminase from Shewanella baltica (strain OS223).